Consider the following 109-residue polypeptide: Parvalbumin alpha (109 aa).

S1 bears the N-acetylserine mark. 2 EF-hand domains span residues 38–73 and 77–109; these read KSDA…FSDG and LNDK…AKMT. Residues D51, D53, S55, Y57, E59, E62, D90, D92, D94, K96, and E101 each coordinate Ca(2+).

The protein belongs to the parvalbumin family. Monomer.

In muscle, parvalbumin is thought to be involved in relaxation after contraction. It binds two calcium ions. This chain is Parvalbumin alpha, found in Raja clavata (Thornback ray).